A 214-amino-acid polypeptide reads, in one-letter code: Nigrelysin (214 aa).

The signal sequence occupies residues 1–21 (MKNRLVIIVFMVVTMLCASLA). The propeptide occupies 22 to 35 (LPLEEKEDEKDEKR). The segment at 38–47 (EVAGAVMEGA) is plays an important role in the hemolytic activity. The tract at residues 46–65 (GANLGMSVLQTILQAIGDVS) is N-terminal region. Positions 89, 122, 140, 142, 168, 172, and 173 each coordinate phosphocholine. The segment at 140 to 155 (SVPYDYNWYSNWWNVK) is trp-rich region, which is important for the binding to lipid membrane. The short motif at 179 to 181 (KGD) is the Cell attachment site, crucial for protein stability element.

It belongs to the actinoporin family. Sea anemone subfamily. As to quaternary structure, octamer or nonamer in membranes. Monomer in the soluble state.

The protein resides in the secreted. Its subcellular location is the nematocyst. It localises to the target cell membrane. In terms of biological role, pore-forming protein that forms cation-selective hydrophilic pores in cell membranes and causes cytolysis. Pore formation is a multi-step process that involves specific recognition of membrane sphingomyelin (but neither cholesterol nor phosphatidylcholine) using aromatic rich region and adjacent phosphocholine (POC) binding site, firm binding to the membrane (mainly driven by hydrophobic interactions) accompanied by the transfer of the N-terminal region to the lipid-water interface and finally pore formation after oligomerization of monomers. This protein shows potent hemolytic activity (EC(50)=0.09 nM), as well as potent cytotoxic activity on nucleated cells (L1210 cells). The cytotoxic process starts with cellular swelling that is time and dose dependent and occurs up to a critical volume, probably due to influx of water via pores opened by this actinoporin. The second phase consists of the final loss of membrane integrity that leads to cytolysis. This is Nigrelysin from Anthopleura nigrescens (Sea anemone).